The primary structure comprises 788 residues: Protein FAR1-RELATED SEQUENCE 12 (788 aa).

Residues 57–133 (EFYNAYAART…QKEHNHELGG (77 aa)) enclose the FAR1 1 domain. The disordered stretch occupies residues 127 to 200 (HNHELGGEGS…GEVSDDHHQT (74 aa)). A compositionally biased stretch (low complexity) spans 142–151 (PRPSRAPAPT). Positions 165–175 (KVVDESDRETR) are enriched in basic and acidic residues. One can recognise an FAR1 2 domain in the interval 225 to 301 (QFYQAYAEVV…NKDHNHDLEP (77 aa)). An MULE domain is found at 399-495 (SVVFDTSYRK…SAWQIREKER (97 aa)). Residues 674–710 (HAVTFSASNLNSSCSCQMFEHEGLLCRHILKVFNLLD) form an SWIM-type zinc finger.

The protein belongs to the FHY3/FAR1 family. In terms of tissue distribution, expressed in hypocotyls, rosette and cauline leaves, inflorescences stems, flowers and siliques.

The protein localises to the nucleus. Functionally, putative transcription activator involved in regulating light control of development. In Arabidopsis thaliana (Mouse-ear cress), this protein is Protein FAR1-RELATED SEQUENCE 12 (FRS12).